Consider the following 576-residue polypeptide: Glutamine-dependent NAD(+) synthetase (576 aa).

Residues 4–246 (LRVTLAQLNP…EEIITVDLDL (243 aa)) form the CN hydrolase domain. Glutamate 44 serves as the catalytic Proton acceptor; for glutaminase activity. The For glutaminase activity role is filled by lysine 112. Tyrosine 118 contributes to the L-glutamine binding site. Residue cysteine 148 is the Nucleophile; for glutaminase activity of the active site. Residues serine 176 and lysine 182 each contribute to the L-glutamine site. The segment at 292–576 (PVREEEMFRA…PITNRFKEPL (285 aa)) is ligase. An ATP-binding site is contributed by 321–328 (GLSGGMDS). A deamido-NAD(+)-binding site is contributed by asparagine 404. Residue threonine 428 participates in ATP binding. Deamido-NAD(+) is bound by residues glutamate 433 and lysine 545.

It in the C-terminal section; belongs to the NAD synthetase family.

The catalysed reaction is deamido-NAD(+) + L-glutamine + ATP + H2O = L-glutamate + AMP + diphosphate + NAD(+) + H(+). It participates in cofactor biosynthesis; NAD(+) biosynthesis; NAD(+) from deamido-NAD(+) (L-Gln route): step 1/1. Functionally, catalyzes the ATP-dependent amidation of deamido-NAD to form NAD. Uses L-glutamine as a nitrogen source. This Thermotoga maritima (strain ATCC 43589 / DSM 3109 / JCM 10099 / NBRC 100826 / MSB8) protein is Glutamine-dependent NAD(+) synthetase (nadE2).